A 227-amino-acid polypeptide reads, in one-letter code: Ribose-5-phosphate isomerase A (227 aa).

Residues 26–29 (TGST), 82–85 (DGAD), and 95–98 (KGGG) each bind substrate. Residue Glu104 is the Proton acceptor of the active site. Residue Lys122 coordinates substrate.

This sequence belongs to the ribose 5-phosphate isomerase family. As to quaternary structure, homodimer.

The enzyme catalyses aldehydo-D-ribose 5-phosphate = D-ribulose 5-phosphate. It participates in carbohydrate degradation; pentose phosphate pathway; D-ribose 5-phosphate from D-ribulose 5-phosphate (non-oxidative stage): step 1/1. Its function is as follows. Catalyzes the reversible conversion of ribose-5-phosphate to ribulose 5-phosphate. In Streptococcus pyogenes serotype M1, this protein is Ribose-5-phosphate isomerase A.